The chain runs to 90 residues: Probable Fe(2+)-trafficking protein (90 aa).

The protein belongs to the Fe(2+)-trafficking protein family.

In terms of biological role, could be a mediator in iron transactions between iron acquisition and iron-requiring processes, such as synthesis and/or repair of Fe-S clusters in biosynthetic enzymes. This Koribacter versatilis (strain Ellin345) protein is Probable Fe(2+)-trafficking protein.